The following is a 326-amino-acid chain: G-protein coupled receptor 1 (326 aa).

S2 is subject to N-acetylserine. Residues 2-23 (SAVLTAGGGLTAGDRSIITAIN) lie on the Extracellular side of the membrane. A helical transmembrane segment spans residues 24-44 (TGASSLSFVGSAFIVLCYCLF). Residues 45–51 (KELRKFS) are Cytoplasmic-facing. A helical transmembrane segment spans residues 52-72 (FKLVFYLALSDMLCSFFLIVG). The Extracellular segment spans residues 73 to 84 (DPSKGFICYAQG). Cysteines 80 and 151 form a disulfide. A helical membrane pass occupies residues 85 to 105 (YTTHFFCVASFLWTTTIAFTL). The Cytoplasmic segment spans residues 106–120 (HRTVVKHKTDVEDLE). A helical transmembrane segment spans residues 121–141 (AMFHLYVWGTSLVVTVIRSFG). Topologically, residues 142-160 (NNHSHLGPWCWTQTGLKGK) are extracellular. Residue N143 is glycosylated (N-linked (GlcNAc...) asparagine). A helical membrane pass occupies residues 161-181 (AVHFLTFYAPLWGAILYNGFT). The Cytoplasmic portion of the chain corresponds to 182-213 (YFQVIRMLRNARRMAVGMSDRVDQFDNRAELK). The helical transmembrane segment at 214–234 (VLNRWGYYPLILIGSWAFGTI) threads the bilayer. The Extracellular segment spans residues 235–246 (NRIHDFIEPGHK). Residues 247-267 (IFWLSVLDVGTAALMGLFNSI) traverse the membrane as a helical segment. The Cytoplasmic portion of the chain corresponds to 268-326 (AYGFNSSVRRAIHERLELFLPERLYRWLPSNFRPKNHLILHQQQQQRSEMVSLKTEDQQ).

Belongs to the G-protein coupled receptor 2 family. In terms of assembly, interacts with GPA1. Mostly present in the meristematic regions. Expressed at low levels in seedlings, vascular tissues of cotyledons, hypocotyl, and roots, stems, leaves, flowering buds and siliques. In dark-grown seedlings, localized in the cotyledons and the hook.

Its subcellular location is the cell membrane. Its function is as follows. Together with GPA1, may regulate the cell cycle via a signaling cascade that uses phosphatidylinositol-specific phospholipase C (PI-PLC) as an effector and inositol 1,4,5-trisphosphate(IP(3)) as a second messenger. Promotes PI-PLC activity and IP(3) accumulation. Involved in the blue light (BL) signaling. Together with GPA1 and ADT3, required for BL-mediated synthesis of phenylpyruvate and subsequently of phenylalanine (Phe), in etiolated seedlings. Probably involved in cytokinin signal transduction. Plays a positive role in gibberellin- (GA) and brassinosteroid- (BR) regulated seed germination, probably independently of a heterotrimeric G-protein. Mediates seed dormancy abolition, and promotes seed germination and flowering. This is G-protein coupled receptor 1 (GCR1) from Arabidopsis thaliana (Mouse-ear cress).